The chain runs to 163 residues: Epithelial membrane protein 3 (163 aa).

The chain crosses the membrane as a helical span at residues 4-24 (LLLVVSALHILILVLLFVATL). Residues Asn-46 and Asn-56 are each glycosylated (N-linked (GlcNAc...) asparagine). A run of 3 helical transmembrane segments spans residues 66-86 (VQAL…LFMI), 100-120 (TGLC…IYAI), and 139-159 (FALA…YIHL).

This sequence belongs to the PMP-22/EMP/MP20 family.

Its subcellular location is the membrane. Probably involved in cell proliferation and cell-cell interactions. The chain is Epithelial membrane protein 3 (Emp3) from Rattus norvegicus (Rat).